Here is a 501-residue protein sequence, read N- to C-terminus: Aldehyde dehydrogenase 1A1 (501 aa).

Ser-2 bears the N-acetylserine mark. Residues Lys-91 and Lys-128 each carry the N6-acetyllysine modification. NAD(+)-binding positions include 167–170 (IPWN), 193–196 (KPAE), 226–227 (GP), and 246–247 (GS). At Lys-252 the chain carries N6-acetyllysine. The Proton acceptor role is filled by Glu-269. Residue 269-271 (ELG) participates in NAD(+) binding. Cys-303 serves as the catalytic Nucleophile. The tract at residues 336 to 501 (LTPGVTQGPQ…VTVKISQKNS (166 aa)) is mediates interaction with PRMT3. Thr-337 carries the post-translational modification Phosphothreonine. 349-353 (EQYDK) is a binding site for NAD(+). N6-acetyllysine occurs at positions 353 and 367. Residue 400-402 (EIF) participates in NAD(+) binding. N6-acetyllysine is present on Lys-410. The residue at position 413 (Ser-413) is a Phosphoserine. Lys-419, Lys-435, and Lys-495 each carry N6-acetyllysine.

The protein belongs to the aldehyde dehydrogenase family. In terms of assembly, homotetramer. Interacts with PRMT3; the interaction is direct, inhibits ALDH1A1 aldehyde dehydrogenase activity and is independent of the methyltransferase activity of PRMT3. The N-terminus is blocked most probably by acetylation. As to expression, expressed by erythrocytes (at protein level).

Its subcellular location is the cytoplasm. It is found in the cytosol. The protein localises to the cell projection. The protein resides in the axon. It catalyses the reaction an aldehyde + NAD(+) + H2O = a carboxylate + NADH + 2 H(+). The enzyme catalyses all-trans-retinal + NAD(+) + H2O = all-trans-retinoate + NADH + 2 H(+). It carries out the reaction 9-cis-retinal + NAD(+) + H2O = 9-cis-retinoate + NADH + 2 H(+). The catalysed reaction is 11-cis-retinal + NAD(+) + H2O = 11-cis-retinoate + NADH + 2 H(+). It catalyses the reaction 13-cis-retinal + NAD(+) + H2O = 13-cis-retinoate + NADH + 2 H(+). The enzyme catalyses 3-deoxyglucosone + NAD(+) + H2O = 2-dehydro-3-deoxy-D-gluconate + NADH + 2 H(+). It carries out the reaction (E)-4-hydroxynon-2-enal + NAD(+) + H2O = (E)-4-hydroxynon-2-enoate + NADH + 2 H(+). The catalysed reaction is malonaldehyde + NAD(+) + H2O = 3-oxopropanoate + NADH + 2 H(+). It catalyses the reaction hexanal + NAD(+) + H2O = hexanoate + NADH + 2 H(+). The enzyme catalyses propanal + NAD(+) + H2O = propanoate + NADH + 2 H(+). It carries out the reaction acetaldehyde + NAD(+) + H2O = acetate + NADH + 2 H(+). The catalysed reaction is benzaldehyde + NAD(+) + H2O = benzoate + NADH + 2 H(+). It catalyses the reaction 4-aminobutanal + NAD(+) + H2O = 4-aminobutanoate + NADH + 2 H(+). Its pathway is cofactor metabolism; retinol metabolism. With respect to regulation, inhibited by citral, disulfiram, and cyanamide. Activated by diethylstilbestrol. Inhibited by duocarmycin analogs. In terms of biological role, cytosolic dehydrogenase that catalyzes the irreversible oxidation of a wide range of aldehydes to their corresponding carboxylic acid. Functions downstream of retinol dehydrogenases and catalyzes the oxidation of retinaldehyde into retinoic acid, the second step in the oxidation of retinol/vitamin A into retinoic acid. This pathway is crucial to control the levels of retinol and retinoic acid, two important molecules which excess can be teratogenic and cytotoxic. Also oxidizes aldehydes resulting from lipid peroxidation like (E)-4-hydroxynon-2-enal/HNE, malonaldehyde and hexanal that form protein adducts and are highly cytotoxic. By participating for instance to the clearance of (E)-4-hydroxynon-2-enal/HNE in the lens epithelium prevents the formation of HNE-protein adducts and lens opacification. Also functions downstream of fructosamine-3-kinase in the fructosamine degradation pathway by catalyzing the oxidation of 3-deoxyglucosone, the carbohydrate product of fructosamine 3-phosphate decomposition, which is itself a potent glycating agent that may react with lysine and arginine side-chains of proteins. Also has an aminobutyraldehyde dehydrogenase activity and is probably part of an alternative pathway for the biosynthesis of GABA/4-aminobutanoate in midbrain, thereby playing a role in GABAergic synaptic transmission. The polypeptide is Aldehyde dehydrogenase 1A1 (Homo sapiens (Human)).